Consider the following 128-residue polypeptide: Ribonuclease pancreatic B (128 aa).

Positions 1-21 (AESSAMKFQRQHMDPEGSPSN) are disordered. Residues Lys-7 and Arg-10 each contribute to the substrate site. His-12 acts as the Proton acceptor in catalysis. N-linked (GlcNAc...) asparagine glycosylation is found at Asn-21 and Asn-34. 4 cysteine pairs are disulfide-bonded: Cys-26-Cys-84, Cys-40-Cys-95, Cys-58-Cys-110, and Cys-65-Cys-72. Residues 41-45 (KPVNT), Lys-66, and Arg-85 contribute to the substrate site. The Proton donor role is filled by His-119.

This sequence belongs to the pancreatic ribonuclease family. Pancreas.

Its subcellular location is the secreted. The catalysed reaction is an [RNA] containing cytidine + H2O = an [RNA]-3'-cytidine-3'-phosphate + a 5'-hydroxy-ribonucleotide-3'-[RNA].. It carries out the reaction an [RNA] containing uridine + H2O = an [RNA]-3'-uridine-3'-phosphate + a 5'-hydroxy-ribonucleotide-3'-[RNA].. This chain is Ribonuclease pancreatic B, found in Cavia porcellus (Guinea pig).